We begin with the raw amino-acid sequence, 668 residues long: 1-deoxy-D-xylulose-5-phosphate synthase (668 aa).

Residues histidine 105 and 146–148 (AHS) contribute to the thiamine diphosphate site. Position 177 (aspartate 177) interacts with Mg(2+). Thiamine diphosphate contacts are provided by residues 178–179 (GA), asparagine 206, tyrosine 316, and glutamate 398. Residue asparagine 206 participates in Mg(2+) binding.

The protein belongs to the transketolase family. DXPS subfamily. In terms of assembly, homodimer. Requires Mg(2+) as cofactor. The cofactor is thiamine diphosphate.

The enzyme catalyses D-glyceraldehyde 3-phosphate + pyruvate + H(+) = 1-deoxy-D-xylulose 5-phosphate + CO2. Its pathway is metabolic intermediate biosynthesis; 1-deoxy-D-xylulose 5-phosphate biosynthesis; 1-deoxy-D-xylulose 5-phosphate from D-glyceraldehyde 3-phosphate and pyruvate: step 1/1. Its function is as follows. Catalyzes the acyloin condensation reaction between C atoms 2 and 3 of pyruvate and glyceraldehyde 3-phosphate to yield 1-deoxy-D-xylulose-5-phosphate (DXP). This Nitrobacter hamburgensis (strain DSM 10229 / NCIMB 13809 / X14) protein is 1-deoxy-D-xylulose-5-phosphate synthase.